We begin with the raw amino-acid sequence, 308 residues long: Ribosomal RNA large subunit methyltransferase F (308 aa).

It belongs to the methyltransferase superfamily. METTL16/RlmF family.

It localises to the cytoplasm. The enzyme catalyses adenosine(1618) in 23S rRNA + S-adenosyl-L-methionine = N(6)-methyladenosine(1618) in 23S rRNA + S-adenosyl-L-homocysteine + H(+). Specifically methylates the adenine in position 1618 of 23S rRNA. The sequence is that of Ribosomal RNA large subunit methyltransferase F from Salmonella schwarzengrund (strain CVM19633).